The chain runs to 284 residues: HTH-type transcriptional activator RhaR (284 aa).

An HTH araC/xylS-type domain is found at 181–279 (DMLMNALRAS…GVSPSAYRQR (99 aa)). 2 DNA-binding regions (H-T-H motif) span residues 198 to 219 (EAFC…KEQT) and 246 to 269 (IGDI…HQAF).

As to quaternary structure, binds DNA as a dimer.

It is found in the cytoplasm. Its function is as follows. Activates expression of the rhaSR operon in response to L-rhamnose. This is HTH-type transcriptional activator RhaR from Pectobacterium carotovorum subsp. carotovorum (strain PC1).